Here is a 785-residue protein sequence, read N- to C-terminus: Formin-like protein 3 (785 aa).

A signal peptide spans 1-20 (MGRLRLAFLAISLVVFVCVS). The interval 96–145 (YDWLAPASSPNEPPAETPDESSPSPSEETPSVVAPSQSVPGPPRPPPQRE) is disordered. Positions 115 to 134 (ESSPSPSEETPSVVAPSQSV) are enriched in low complexity. Residues 154–174 (LIIAVASTAVLTFVFVALMFL) traverse the membrane as a helical segment. Disordered regions lie at residues 184–228 (AVGS…KKRS), 241–329 (EFST…APKT), and 730–785 (ETTK…SSPS). Residues 201 to 223 (STGSTENSPTVASTSRKMFSVAS) show a composition bias toward polar residues. Over residues 256-303 (LKLPPGRSAPPPPPAAAPPPQPPPPPPPKPQPPPPPKIARPPPAPPKG) the composition is skewed to pro residues. An FH2 domain is found at 321-747 (DSETGAPKTK…SGKKESEMTT (427 aa)). A compositionally biased stretch (polar residues) spans 745–754 (MTTSDSNQPS). Acidic residues predominate over residues 773 to 785 (SDDSDDEEDSSPS).

The protein belongs to the formin-like family. Class-I subfamily.

It localises to the membrane. Its function is as follows. Acts as actin nucleation factor that directs the formation of actin cables and polarized growth in pollen tubes. The polypeptide is Formin-like protein 3 (FH3) (Arabidopsis thaliana (Mouse-ear cress)).